The chain runs to 172 residues: Protein/nucleic acid deglycase 2 (172 aa).

Residues 3 to 171 (KKIAVLITDE…FNREALRLLG (169 aa)) enclose the PfpI endopeptidase domain. The active-site Nucleophile is C104.

It belongs to the peptidase C56 family. As to quaternary structure, exists in monomeric, trimeric, and hexameric forms.

It localises to the cytoplasm. The enzyme catalyses N(omega)-(1-hydroxy-2-oxopropyl)-L-arginyl-[protein] + H2O = lactate + L-arginyl-[protein] + H(+). It catalyses the reaction N(6)-(1-hydroxy-2-oxopropyl)-L-lysyl-[protein] + H2O = lactate + L-lysyl-[protein] + H(+). It carries out the reaction S-(1-hydroxy-2-oxopropyl)-L-cysteinyl-[protein] + H2O = lactate + L-cysteinyl-[protein] + H(+). The catalysed reaction is N(omega)-(1-hydroxy-2-oxoethyl)-L-arginyl-[protein] + H2O = L-arginyl-[protein] + glycolate + H(+). The enzyme catalyses N(6)-(1-hydroxy-2-oxoethyl)-L-lysyl-[protein] + H2O = glycolate + L-lysyl-[protein] + H(+). It catalyses the reaction S-(1-hydroxy-2-oxoethyl)-L-cysteinyl-[protein] + H2O = glycolate + L-cysteinyl-[protein] + H(+). It carries out the reaction N(2)-(1-hydroxy-2-oxopropyl)-dGTP + H2O = lactate + dGTP + H(+). The catalysed reaction is N(2)-(1-hydroxy-2-oxopropyl)-GTP + H2O = lactate + GTP + H(+). The enzyme catalyses N(2)-(1-hydroxy-2-oxopropyl)-GDP + H2O = lactate + GDP + H(+). It catalyses the reaction N(2)-(1-hydroxy-2-oxopropyl)-GMP + H2O = lactate + GMP + H(+). It carries out the reaction N(2)-(1-hydroxy-2-oxoethyl)-dGTP + H2O = dGTP + glycolate + H(+). The catalysed reaction is N(2)-(1-hydroxy-2-oxoethyl)-GTP + H2O = glycolate + GTP + H(+). The enzyme catalyses N(2)-(1-hydroxy-2-oxoethyl)-GDP + H2O = glycolate + GDP + H(+). It catalyses the reaction N(2)-(1-hydroxy-2-oxoethyl)-GMP + H2O = glycolate + GMP + H(+). It carries out the reaction an N(2)-(1-hydroxy-2-oxopropyl)-guanosine in RNA + H2O = a guanosine in RNA + lactate + H(+). The catalysed reaction is an N(2)-(1-hydroxy-2-oxopropyl)-2'-deoxyguanosine in DNA + H2O = a 2'-deoxyguanosine in DNA + lactate + H(+). The enzyme catalyses an N(2)-(1-hydroxy-2-oxoethyl)-guanosine in RNA + H2O = a guanosine in RNA + glycolate + H(+). It catalyses the reaction an N(2)-(1-hydroxy-2-oxoethyl)-2'-deoxyguanosine in DNA + H2O = a 2'-deoxyguanosine in DNA + glycolate + H(+). Glyoxalase activity is inhibited by zinc ions at pH 7.0. Protein and nucleotide deglycase that catalyzes the deglycation of the Maillard adducts formed between amino groups of proteins or nucleotides and reactive carbonyl groups of glyoxals. Thus, functions as a protein deglycase that repairs methylglyoxal- and glyoxal-glycated proteins, and releases repaired proteins and lactate or glycolate, respectively. Deglycates cysteine, arginine and lysine residues in proteins, and thus reactivates these proteins by reversing glycation by glyoxals. Is able to repair glycated serum albumin, collagen, glyceraldehyde-3-phosphate dehydrogenase, and fructose biphosphate aldolase. Acts on early glycation intermediates (hemithioacetals and aminocarbinols), preventing the formation of advanced glycation endproducts (AGE) that cause irreversible damage. Also functions as a nucleotide deglycase able to repair glycated guanine in the free nucleotide pool (GTP, GDP, GMP, dGTP) and in DNA and RNA. Is thus involved in a major nucleotide repair system named guanine glycation repair (GG repair), dedicated to reversing methylglyoxal and glyoxal damage via nucleotide sanitization and direct nucleic acid repair. In vitro, prevents acrylamide formation in asparagine/glyoxal and asparagine/sugar mixtures at 55 degrees Celsius, likely by degrading asparagine/glyoxal Maillard adducts formed at high temperatures. Also displays an apparent glyoxalase activity that in fact reflects its deglycase activity. Is a general stress protein; is required for the protection of bacterial cells against many environmental stresses, including oxidative, thermal, osmotic, UV, and pH stresses. And plays an important role in protection against electrophile/carbonyl stress. This chain is Protein/nucleic acid deglycase 2 (yhbO), found in Escherichia coli (strain K12).